A 207-amino-acid chain; its full sequence is A-type ATP synthase subunit E (207 aa).

Belongs to the V-ATPase E subunit family. As to quaternary structure, has multiple subunits with at least A(3), B(3), C, D, E, F, H, I and proteolipid K(x).

The protein localises to the cell membrane. Component of the A-type ATP synthase that produces ATP from ADP in the presence of a proton gradient across the membrane. The chain is A-type ATP synthase subunit E from Methanosphaera stadtmanae (strain ATCC 43021 / DSM 3091 / JCM 11832 / MCB-3).